Reading from the N-terminus, the 510-residue chain is Calmodulin-binding receptor-like cytoplasmic kinase 3 (510 aa).

The first 30 residues, 1-30, serve as a signal peptide directing secretion; the sequence is MGGDDLSFTRLVITALFGLLMLLQIKETSA. Positions 166-178 are enriched in polar residues; the sequence is VSSFEMSPSSEKI. The segment at 166-209 is disordered; that stretch reads VSSFEMSPSSEKIPQSPFRAPPSPSRVPQSPSRYAMSPRPSRLG. A Phosphothreonine modification is found at threonine 214. A Protein kinase domain is found at 225–499; it reads FADSHQIGEG…MEAVGKQLWA (275 aa). ATP contacts are provided by residues 231–239 and lysine 253; that span reads IGEGGFGVV. The tract at residues 240–265 is caM-binding; the sequence is FKGVLDDGQVVAIKRAKKEHFENLRT. Aspartate 350 (proton acceptor) is an active-site residue. At serine 354 the chain carries Phosphoserine. 2 positions are modified to phosphothreonine: threonine 386 and threonine 391. Residue tyrosine 399 is modified to Phosphotyrosine.

Belongs to the protein kinase superfamily. Ser/Thr protein kinase family. As to quaternary structure, interacts with calmodulin (CaM) in a Ca(2+)-dependent manner.

The protein localises to the cytoplasm. It carries out the reaction L-seryl-[protein] + ATP = O-phospho-L-seryl-[protein] + ADP + H(+). The catalysed reaction is L-threonyl-[protein] + ATP = O-phospho-L-threonyl-[protein] + ADP + H(+). This chain is Calmodulin-binding receptor-like cytoplasmic kinase 3 (CRCK3), found in Arabidopsis thaliana (Mouse-ear cress).